The primary structure comprises 124 residues: Small ribosomal subunit protein uS12 (124 aa).

Asp89 carries the post-translational modification 3-methylthioaspartic acid. A disordered region spans residues 104 to 124 (TAGVENRKQSRSKYGAKRPKK). The segment covering 112–124 (QSRSKYGAKRPKK) has biased composition (basic residues).

Belongs to the universal ribosomal protein uS12 family. Part of the 30S ribosomal subunit. Contacts proteins S8 and S17. May interact with IF1 in the 30S initiation complex.

In terms of biological role, with S4 and S5 plays an important role in translational accuracy. Its function is as follows. Interacts with and stabilizes bases of the 16S rRNA that are involved in tRNA selection in the A site and with the mRNA backbone. Located at the interface of the 30S and 50S subunits, it traverses the body of the 30S subunit contacting proteins on the other side and probably holding the rRNA structure together. The combined cluster of proteins S8, S12 and S17 appears to hold together the shoulder and platform of the 30S subunit. The polypeptide is Small ribosomal subunit protein uS12 (Pseudothermotoga lettingae (strain ATCC BAA-301 / DSM 14385 / NBRC 107922 / TMO) (Thermotoga lettingae)).